A 206-amino-acid chain; its full sequence is Pyridoxine/pyridoxamine 5'-phosphate oxidase (206 aa).

Residues 53-58, 68-69, Lys-75, and Gln-97 contribute to the FMN site; these read RMVLLK and YT. Residue Lys-58 coordinates substrate. Substrate-binding residues include Tyr-115, Arg-119, and Ser-123. Residues 132 to 133 and Trp-177 each bind FMN; that span reads QS. Residue 183–185 coordinates substrate; the sequence is RLH. Arg-187 is a binding site for FMN.

This sequence belongs to the pyridoxamine 5'-phosphate oxidase family. In terms of assembly, homodimer. FMN serves as cofactor.

It carries out the reaction pyridoxamine 5'-phosphate + O2 + H2O = pyridoxal 5'-phosphate + H2O2 + NH4(+). The catalysed reaction is pyridoxine 5'-phosphate + O2 = pyridoxal 5'-phosphate + H2O2. The protein operates within cofactor metabolism; pyridoxal 5'-phosphate salvage; pyridoxal 5'-phosphate from pyridoxamine 5'-phosphate: step 1/1. It participates in cofactor metabolism; pyridoxal 5'-phosphate salvage; pyridoxal 5'-phosphate from pyridoxine 5'-phosphate: step 1/1. In terms of biological role, catalyzes the oxidation of either pyridoxine 5'-phosphate (PNP) or pyridoxamine 5'-phosphate (PMP) into pyridoxal 5'-phosphate (PLP). This Rhizobium etli (strain ATCC 51251 / DSM 11541 / JCM 21823 / NBRC 15573 / CFN 42) protein is Pyridoxine/pyridoxamine 5'-phosphate oxidase.